Consider the following 311-residue polypeptide: MAQFQIECVESRTDGARGQYGSFVIEALNQGQGITLGNALRRSILSDLEGTAIVAVRIAGVNHEFSTIPGVREDVLEILLNLKEVVFKSNNQESQIGRIKVQGPAIVTAGLFELSSDIEVVDPRQYIATICNNTIFEMEFKIEKSCGYRLAEKAVDELSLDFLQVDSVFMPVNKVNYKVEEVRVGTNSIKDRLILQIWTNGSISPQEAISQGATVLTNLFCSLRNLDFKSVDTYRNKEDKKISQVLIEELQLSVRAYNCLKRAQIHSIADLLDYSQEELLEIKNFGQKSAEEVIYALQKTLGISLPKEKTD.

An alpha N-terminal domain (alpha-NTD) region spans residues 1 to 227 (MAQFQIECVE…NLFCSLRNLD (227 aa)). An alpha C-terminal domain (alpha-CTD) region spans residues 242 to 311 (ISQVLIEELQ…GISLPKEKTD (70 aa)).

The protein belongs to the RNA polymerase alpha chain family. In plastids the minimal PEP RNA polymerase catalytic core is composed of four subunits: alpha, beta, beta', and beta''. When a (nuclear-encoded) sigma factor is associated with the core the holoenzyme is formed, which can initiate transcription.

The protein resides in the plastid. It localises to the chloroplast. It carries out the reaction RNA(n) + a ribonucleoside 5'-triphosphate = RNA(n+1) + diphosphate. Its function is as follows. DNA-dependent RNA polymerase catalyzes the transcription of DNA into RNA using the four ribonucleoside triphosphates as substrates. This is DNA-directed RNA polymerase subunit alpha from Porphyra purpurea (Red seaweed).